The primary structure comprises 114 residues: MGSRPCALGLFCCCSSCFCLCCPRHRPVSRLAAAVGGAAAVPAVVSGVTGLILSPSQSPIFIQPTPSPPMSPLRPGLDLVFANPPDHSAPLGVTRPSAPPLPHVVDLPQLGPRR.

The tract at residues 1-28 is membrane association; that stretch reads MGSRPCALGLFCCCSSCFCLCCPRHRPV. Hydrophobic stretches follow at residues 6–22 and 33–53; these read CALGLFCCCSSCFCLCC and AAVGGAAAVPAVVSGVTGLIL. Residues 6 to 22 form an induction of host SIRPA expression region; the sequence is CALGLFCCCSSCFCLCC. Residues 28-68 form an interaction with host HPX region; the sequence is VSRLAAAVGGAAAVPAVVSGVTGLILSPSQSPIFIQPTPSP. The segment at 48 to 72 is interaction with the capsid protein; it reads VTGLILSPSQSPIFIQPTPSPPMSP. Ser71 bears the Phosphoserine; by host mark. The homodimerization, and interaction with host AMBP/bikunin stretch occupies residues 72–114; the sequence is PLRPGLDLVFANPPDHSAPLGVTRPSAPPLPHVVDLPQLGPRR. The tract at residues 91 to 114 is disordered; the sequence is LGVTRPSAPPLPHVVDLPQLGPRR. Positions 95 to 104 are interaction with host SRC, HCK, FYN, PIK3R3 and GRB2; the sequence is RPSAPPLPHV. The PTAP/PSAP motif signature appears at 96 to 99; sequence PSAP.

This sequence belongs to the hepevirus ORF3 protein family. In terms of assembly, forms homooligomers. Interacts with host SRC, HCK, FYN, PIK3R3 and GRB2 (via SH3 domain); binding does not activate the kinases. Interacts with host AMBP/bikunin and AMBP/alpha-1-microglobulin peptides. Interacts with host HPX/hemopexin. Interacts (when phosphorylated) with capsid protein ORF2. Interacts with host TSG101; this interaction plays a role in viral release from the host cell. Interacts with host SIRPA; this interaction down-regulates the phosphorylation of host IRF3. Palmitoylated in the N-terminus.

It localises to the host endoplasmic reticulum membrane. The protein resides in the host cytoplasm. It is found in the host cytoskeleton. The protein localises to the virion. Its subcellular location is the host cell membrane. In terms of biological role, small multifunctional phosphoprotein involved in virion morphogenesis, egress and counteracting host innate immunity. Plays critical roles in the final steps of viral release by interacting with host TSG101, a member of the vacuolar protein-sorting pathway and using other cellular host proteins involved in vesicle formation pathway. Also acts as a viroporin and forms ion conductive pores allowing viral particle release. Impairs the generation of type I interferon by down-regulating host TLR3 and TLR7 as well as their downstream signaling pathways. Down-regulates the phosphorylation of host IRF3 via the interaction with host SIRP-alpha, thereby inhibiting IFN-I expression. Interacts with host microtubules. In Hepatitis E virus genotype 1 (isolate Human/China/HeBei/1987) (HEV), this protein is Protein ORF3.